Consider the following 534-residue polypeptide: Bifunctional purine biosynthesis protein PurH (534 aa).

Positions 6–151 (TRLPIRRALI…KNHKDVAIVV (146 aa)) constitute an MGS-like domain.

This sequence belongs to the PurH family.

The enzyme catalyses (6R)-10-formyltetrahydrofolate + 5-amino-1-(5-phospho-beta-D-ribosyl)imidazole-4-carboxamide = 5-formamido-1-(5-phospho-D-ribosyl)imidazole-4-carboxamide + (6S)-5,6,7,8-tetrahydrofolate. It carries out the reaction IMP + H2O = 5-formamido-1-(5-phospho-D-ribosyl)imidazole-4-carboxamide. It functions in the pathway purine metabolism; IMP biosynthesis via de novo pathway; 5-formamido-1-(5-phospho-D-ribosyl)imidazole-4-carboxamide from 5-amino-1-(5-phospho-D-ribosyl)imidazole-4-carboxamide (10-formyl THF route): step 1/1. It participates in purine metabolism; IMP biosynthesis via de novo pathway; IMP from 5-formamido-1-(5-phospho-D-ribosyl)imidazole-4-carboxamide: step 1/1. The polypeptide is Bifunctional purine biosynthesis protein PurH (Pseudomonas syringae pv. tomato (strain ATCC BAA-871 / DC3000)).